Here is an 81-residue protein sequence, read N- to C-terminus: Conotoxin ArMKLT2-0311 (81 aa).

The N-terminal stretch at 1-22 (MKLTCVLIVALLFLTACQLTTA) is a signal peptide. The span at 23–34 (DDSRDKQEDPLV) shows a compositional bias: basic and acidic residues. The tract at residues 23–45 (DDSRDKQEDPLVRSHRKMQKSED) is disordered. Positions 23 to 51 (DDSRDKQEDPLVRSHRKMQKSEDPKMAER) are excised as a propeptide. 3 disulfides stabilise this stretch: cysteine 52–cysteine 67, cysteine 59–cysteine 71, and cysteine 66–cysteine 80.

It belongs to the conotoxin O1 superfamily. As to expression, expressed by the venom duct.

It is found in the secreted. This chain is Conotoxin ArMKLT2-0311, found in Conus arenatus (Sand-dusted cone).